A 252-amino-acid chain; its full sequence is MITKRIIPCLDVKDGRVVKGVQFVQLRDAGDPVELAKAYDEQGADELVFLDISASHEGRKTMVDVVERVAAQLAIPFTVGGGIHSLEDMKRMLRAGADKVSLNTAAVLHPTLITEGADFFGSQCIVVAIDAKYDETLGSWRVYTHGGRNATNWEVVAWAQEAVRLGAGEILLTSMDADGGKNGFDIELTRRVSEAVPVPVIASGGAGKAEHFLEAFEKGKADAALAASIFHYKETSVGQVKAYLKEKGVNVR.

Catalysis depends on residues D11 and D130.

This sequence belongs to the HisA/HisF family. In terms of assembly, heterodimer of HisH and HisF.

Its subcellular location is the cytoplasm. It carries out the reaction 5-[(5-phospho-1-deoxy-D-ribulos-1-ylimino)methylamino]-1-(5-phospho-beta-D-ribosyl)imidazole-4-carboxamide + L-glutamine = D-erythro-1-(imidazol-4-yl)glycerol 3-phosphate + 5-amino-1-(5-phospho-beta-D-ribosyl)imidazole-4-carboxamide + L-glutamate + H(+). The protein operates within amino-acid biosynthesis; L-histidine biosynthesis; L-histidine from 5-phospho-alpha-D-ribose 1-diphosphate: step 5/9. In terms of biological role, IGPS catalyzes the conversion of PRFAR and glutamine to IGP, AICAR and glutamate. The HisF subunit catalyzes the cyclization activity that produces IGP and AICAR from PRFAR using the ammonia provided by the HisH subunit. This chain is Imidazole glycerol phosphate synthase subunit HisF, found in Geobacillus kaustophilus (strain HTA426).